Consider the following 244-residue polypeptide: Phosphoadenosine 5'-phosphosulfate reductase (244 aa).

The active-site Nucleophile; cysteine thiosulfonate intermediate is Cys-239.

Belongs to the PAPS reductase family. CysH subfamily.

It localises to the cytoplasm. The enzyme catalyses [thioredoxin]-disulfide + sulfite + adenosine 3',5'-bisphosphate + 2 H(+) = [thioredoxin]-dithiol + 3'-phosphoadenylyl sulfate. The protein operates within sulfur metabolism; hydrogen sulfide biosynthesis; sulfite from sulfate: step 3/3. Its function is as follows. Catalyzes the formation of sulfite from phosphoadenosine 5'-phosphosulfate (PAPS) using thioredoxin as an electron donor. This chain is Phosphoadenosine 5'-phosphosulfate reductase, found in Escherichia coli O157:H7.